The chain runs to 31 residues: MPRRRRASRRIRRRRRPRVSRRRRRGGRRRR.

The interval 1 to 31 (MPRRRRASRRIRRRRRPRVSRRRRRGGRRRR) is disordered.

As to expression, testis.

Its subcellular location is the nucleus. It is found in the chromosome. Functionally, protamines substitute for histones in the chromatin of sperm during the haploid phase of spermatogenesis. They compact sperm DNA into a highly condensed, stable and inactive complex. In Oncorhynchus mykiss (Rainbow trout), this protein is Protamine-1B.